The chain runs to 643 residues: Protein tramtrack, beta isoform (643 aa).

A BTB domain is found at 33 to 98 (TDVTLAVEGQ…MYRGEVSVDQ (66 aa)). Disordered regions lie at residues 118-148 (EVND…PQLQ) and 171-300 (ANAG…GLDT). Lys-123 is covalently cross-linked (Glycyl lysine isopeptide (Lys-Gly) (interchain with G-Cter in ubiquitin)). A compositionally biased stretch (low complexity) spans 125–145 (SPAAAAAGAGATGSESTATTP). A compositionally biased stretch (polar residues) spans 176 to 187 (TPTLPVQPSLLS). The segment covering 192–201 (PKRKRGRPRK) has biased composition (basic residues). Lys-201 is covalently cross-linked (Glycyl lysine isopeptide (Lys-Gly) (interchain with G-Cter in ubiquitin)). Residues 254–285 (HTDDLNESRDSLPSKRSKNSKDHRVVSHHEDN) are compositionally biased toward basic and acidic residues. Residues Lys-355, Lys-397, Lys-418, Lys-457, Lys-478, and Lys-480 each participate in a glycyl lysine isopeptide (Lys-Gly) (interchain with G-Cter in ubiquitin) cross-link. 2 consecutive C2H2-type zinc fingers follow at residues 508–531 (YRCK…VTSH) and 538–561 (YPCP…KIIH). A Glycyl lysine isopeptide (Lys-Gly) (interchain with G-Cter in ubiquitin) cross-link involves residue Lys-545. Residues 584–643 (GVSGASTPPPPDLSGQNSNQSLPATSNALSTSSSSSTSSSSGSLGPLTTSAPPAPAAAAQ) form a disordered region. The segment covering 604-643 (SLPATSNALSTSSSSSTSSSSGSLGPLTTSAPPAPAAAAQ) has biased composition (low complexity).

In terms of assembly, can form homodimers. Interacts with Trl in vivo via the BTB domain. Interacts with phyl. Interacts with Usp47. Polyubiquitinated by sina. Polyubiquitin linkage is mainly through 'Lys-48', but linkage through 'Lys-63' also occurs. Deubiquitination by Usp47 leads to its stabilization.

The protein localises to the nucleus. Binds to a number of sites in the transcriptional regulatory region of ftz. Isoform beta is required to repress inappropriate segmentation gene transcription and repress genes incompatible with development of photoreceptor cell fates. Probable repressor of the transcription of the segmentation genes ftz, eve, h, odd, run, and en. Inhibits Trl-dependent activation of eve. May bind to the region AGGGC/TGG. Degradation of ttk is directed by binding of sinah or sina, via the adapter molecule phyl which binds to the BTB domain of ttk. A second method of degradation exists that is phyl-independent, this is mediated by recognition of motifs in the C-terminus of ttk. This Drosophila melanogaster (Fruit fly) protein is Protein tramtrack, beta isoform (ttk).